Here is a 330-residue protein sequence, read N- to C-terminus: Type II methyltransferase M.MthTI (330 aa).

The SAM-dependent MTase C5-type domain occupies methionine 3 to valine 328. Cysteine 73 is a catalytic residue.

It belongs to the class I-like SAM-binding methyltransferase superfamily. C5-methyltransferase family.

It carries out the reaction a 2'-deoxycytidine in DNA + S-adenosyl-L-methionine = a 5-methyl-2'-deoxycytidine in DNA + S-adenosyl-L-homocysteine + H(+). In terms of biological role, a methylase that recognizes the double-stranded sequence 5'-GGCC-3', methylates C-3 on both strands, and protects the DNA from cleavage by the MthTI endonuclease. The chain is Type II methyltransferase M.MthTI (mthTIM) from Methanothermobacter thermautotrophicus (Methanobacterium thermoformicicum).